Consider the following 189-residue polypeptide: Pyridoxal 5'-phosphate synthase subunit PdxT (189 aa).

Residue 46 to 48 participates in L-glutamine binding; it reads GES. Catalysis depends on C78, which acts as the Nucleophile. L-glutamine contacts are provided by residues R107 and 136 to 137; that span reads IR. Catalysis depends on charge relay system residues H173 and E175.

The protein belongs to the glutaminase PdxT/SNO family. As to quaternary structure, in the presence of PdxS, forms a dodecamer of heterodimers. Only shows activity in the heterodimer.

The enzyme catalyses aldehydo-D-ribose 5-phosphate + D-glyceraldehyde 3-phosphate + L-glutamine = pyridoxal 5'-phosphate + L-glutamate + phosphate + 3 H2O + H(+). The catalysed reaction is L-glutamine + H2O = L-glutamate + NH4(+). The protein operates within cofactor biosynthesis; pyridoxal 5'-phosphate biosynthesis. Functionally, catalyzes the hydrolysis of glutamine to glutamate and ammonia as part of the biosynthesis of pyridoxal 5'-phosphate. The resulting ammonia molecule is channeled to the active site of PdxS. The protein is Pyridoxal 5'-phosphate synthase subunit PdxT of Roseiflexus castenholzii (strain DSM 13941 / HLO8).